Reading from the N-terminus, the 147-residue chain is MVHFTPEEKCIISKQWGQVNIDETGGEALGRLLVVYPWTQRFFDNFGNLSSSSAIMGNPKVKAHGKKVLTSFGDAIKNMDNLKGAFAKLSELHCDKLHVDPENFKLLGNVLLIVLATHFGKEFTPEVQAAWQKLVSGVAIALAHKYH.

Residues 3 to 147 (HFTPEEKCII…VAIALAHKYH (145 aa)) form the Globin domain. At S51 the chain carries Phosphoserine. Residues H64 and H93 each contribute to the heme b site.

The protein belongs to the globin family. As to expression, red blood cells.

In terms of biological role, hemoglobin epsilon chain is a beta-type chain found in early embryos. The sequence is that of Hemoglobin subunit epsilon (HBE1) from Oryctolagus cuniculus (Rabbit).